We begin with the raw amino-acid sequence, 143 residues long: Large ribosomal subunit protein uL11 (143 aa).

It belongs to the universal ribosomal protein uL11 family. As to quaternary structure, part of the ribosomal stalk of the 50S ribosomal subunit. Interacts with L10 and the large rRNA to form the base of the stalk. L10 forms an elongated spine to which L12 dimers bind in a sequential fashion forming a multimeric L10(L12)X complex. Post-translationally, one or more lysine residues are methylated.

In terms of biological role, forms part of the ribosomal stalk which helps the ribosome interact with GTP-bound translation factors. This is Large ribosomal subunit protein uL11 from Laribacter hongkongensis (strain HLHK9).